The chain runs to 354 residues: Arginase-2, mitochondrial (354 aa).

A mitochondrion-targeting transit peptide spans 1 to 22 (MFLRSSASRLLHGQIPCVLTRS). 4 residues coordinate Mn(2+): His120, Asp143, His145, and Asp147. Substrate is bound by residues 145-149 (HADIN), 156-158 (SGN), and Glu202. Mn(2+) contacts are provided by Asp251 and Asp253. 2 residues coordinate substrate: Thr265 and Glu296.

Belongs to the arginase family. As to quaternary structure, homotrimer. Mn(2+) serves as cofactor.

The protein resides in the mitochondrion. The catalysed reaction is L-arginine + H2O = urea + L-ornithine. It participates in nitrogen metabolism; urea cycle; L-ornithine and urea from L-arginine: step 1/1. In terms of biological role, may play a role in the regulation of extra-urea cycle arginine metabolism and also in down-regulation of nitric oxide synthesis. Extrahepatic arginase functions to regulate L-arginine bioavailability to nitric oxid synthase (NOS). Arginine metabolism is a critical regulator of innate and adaptive immune responses. Seems to be involved in negative regulation of the survival capacity of activated CD4(+) and CD8(+) T cells. May suppress inflammation-related signaling in asthmatic airway epithelium. May contribute to the immune evasion of H.pylori by restricting M1 macrophage activation and polyamine metabolism. May play a role in promoting prenatal immune suppression. Regulates RPS6KB1 signaling, which promotes endothelial cell senescence and inflammation and implicates NOS3/eNOS dysfunction. Can inhibit endothelial autophagy independently of its enzymatic activity implicating mTORC2 signaling. Involved in vascular smooth muscle cell senescence and apoptosis independently of its enzymatic activity. The protein is Arginase-2, mitochondrial (Arg2) of Mus musculus (Mouse).